Reading from the N-terminus, the 391-residue chain is 3-ketoacyl-CoA thiolase (391 aa).

Cys95 (acyl-thioester intermediate) is an active-site residue. Catalysis depends on proton acceptor residues His347 and Cys377.

It belongs to the thiolase-like superfamily. Thiolase family. In terms of assembly, heterotetramer of two alpha chains (FadB) and two beta chains (FadA).

The protein localises to the cytoplasm. It catalyses the reaction an acyl-CoA + acetyl-CoA = a 3-oxoacyl-CoA + CoA. Its pathway is lipid metabolism; fatty acid beta-oxidation. Its function is as follows. Catalyzes the final step of fatty acid oxidation in which acetyl-CoA is released and the CoA ester of a fatty acid two carbons shorter is formed. This is 3-ketoacyl-CoA thiolase from Ectopseudomonas mendocina (strain ymp) (Pseudomonas mendocina).